A 211-amino-acid polypeptide reads, in one-letter code: Mediator of RNA polymerase II transcription subunit 20 (211 aa).

Belongs to the Mediator complex subunit 20 family. Component of the Mediator complex.

The protein localises to the nucleus. Functionally, component of the Mediator complex, a coactivator involved in the regulated transcription of nearly all RNA polymerase II-dependent genes. Mediator functions as a bridge to convey information from gene-specific regulatory proteins to the basal RNA polymerase II transcription machinery. Mediator is recruited to promoters by direct interactions with regulatory proteins and serves as a scaffold for the assembly of a functional preinitiation complex with RNA polymerase II and the general transcription factors. The chain is Mediator of RNA polymerase II transcription subunit 20 (SRB2) from Kluyveromyces lactis (strain ATCC 8585 / CBS 2359 / DSM 70799 / NBRC 1267 / NRRL Y-1140 / WM37) (Yeast).